A 178-amino-acid polypeptide reads, in one-letter code: Interleukin-10 (178 aa).

The first 18 residues, 1-18 (MHSSALLCCLVLLTGVRA), serve as a signal peptide directing secretion. 2 cysteine pairs are disulfide-bonded: Cys30/Cys126 and Cys80/Cys132. Asn134 carries an N-linked (GlcNAc...) asparagine glycan.

Belongs to the IL-10 family. Homodimer. Interacts with IL10RA and IL10RB. As to expression, produced by a variety of cell lines, including T-cells, macrophages, mast cells and other cell types.

It is found in the secreted. Functionally, major immune regulatory cytokine that acts on many cells of the immune system where it has profound anti-inflammatory functions, limiting excessive tissue disruption caused by inflammation. Mechanistically, IL10 binds to its heterotetrameric receptor comprising IL10RA and IL10RB leading to JAK1 and STAT2-mediated phosphorylation of STAT3. In turn, STAT3 translocates to the nucleus where it drives expression of anti-inflammatory mediators. Targets antigen-presenting cells (APCs) such as macrophages and monocytes and inhibits their release of pro-inflammatory cytokines including granulocyte-macrophage colony-stimulating factor /GM-CSF, granulocyte colony-stimulating factor/G-CSF, IL-1 alpha, IL-1 beta, IL-6, IL-8 and TNF-alpha. Also interferes with antigen presentation by reducing the expression of MHC-class II and co-stimulatory molecules, thereby inhibiting their ability to induce T cell activation. In addition, controls the inflammatory response of macrophages by reprogramming essential metabolic pathways including mTOR signaling. The chain is Interleukin-10 (IL10) from Homo sapiens (Human).